Reading from the N-terminus, the 254-residue chain is Chymotrypsin-like serine proteinase (254 aa).

Residues 1–18 form the signal peptide; it reads MNALLNILLCTLAATALA. The propeptide at 19–23 is activation peptide; the sequence is EISPN. Positions 24-254 constitute a Peptidase S1 domain; it reads IVGGSNAAAG…SSFYNWVQTQ (231 aa). The cysteines at positions 53 and 69 are disulfide-linked. Active-site charge relay system residues include His68 and Asp117. Cystine bridges form between Cys146/Cys218, Cys181/Cys199, and Cys208/Cys233. Catalysis depends on Ser212, which acts as the Charge relay system.

This sequence belongs to the peptidase S1 family. Monomer. In terms of tissue distribution, expressed specifically in the distal quarter of the intestine.

It localises to the secreted. The protein localises to the extracellular space. Activated by an autocatalytic mechanism. In terms of biological role, specificity similar to chymotrypsin. The protein is Chymotrypsin-like serine proteinase of Haliotis rufescens (California red abalone).